A 524-amino-acid chain; its full sequence is Cytochrome P450 4F1 (524 aa).

A helical transmembrane segment spans residues 15–35; sequence VAFPWQTLLLFGASWILAQIL. Residues glutamate 328 and cysteine 468 each coordinate heme.

It belongs to the cytochrome P450 family. Heme serves as cofactor. Expressed in liver.

The protein resides in the endoplasmic reticulum membrane. It is found in the microsome membrane. The enzyme catalyses (5Z,8Z,11Z,14Z)-eicosatetraenoate + reduced [NADPH--hemoprotein reductase] + O2 = 20-hydroxy-(5Z,8Z,11Z,14Z)-eicosatetraenoate + oxidized [NADPH--hemoprotein reductase] + H2O + H(+). It catalyses the reaction 5-hydroxy-(6E,8Z,11Z,14Z)-eicosatetraenoate + reduced [NADPH--hemoprotein reductase] + O2 = 5,20-dihydroxy-(6E,8Z,11Z,14Z)-eicosatetraenoate + oxidized [NADPH--hemoprotein reductase] + H2O + H(+). The catalysed reaction is 8-hydroxy-(5Z,9E,11Z,14Z)-eicosatetraenoate + reduced [NADPH--hemoprotein reductase] + O2 = 8,20-dihydroxy-(5Z,9E,11Z,14Z)-eicosatetraenoate + oxidized [NADPH--hemoprotein reductase] + H2O + H(+). It carries out the reaction leukotriene B4 + reduced [NADPH--hemoprotein reductase] + O2 = 20-hydroxy-leukotriene B4 + oxidized [NADPH--hemoprotein reductase] + H2O + H(+). The enzyme catalyses 6-trans-leukotriene B4 + reduced [NADPH--hemoprotein reductase] + O2 = 20-hydroxy-6-trans-leukotriene B4 + oxidized [NADPH--hemoprotein reductase] + H2O + H(+). It catalyses the reaction lipoxin A4 + reduced [NADPH--hemoprotein reductase] + O2 = 20-hydroxy-lipoxin A4 + oxidized [NADPH--hemoprotein reductase] + H2O + H(+). In terms of biological role, a cytochrome P450 monooxygenase involved in the metabolism of arachidonic acid and its oxygenated derivatives. Mechanistically, uses molecular oxygen inserting one oxygen atom into a substrate, and reducing the second into a water molecule, with two electrons provided by NADPH via cytochrome P450 reductase (CPR; NADPH-ferrihemoprotein reductase). Participates in the conversion of arachidonic acid to omega-hydroxyeicosatetraenoic acid (20-HETE), a signaling molecule acting both as vasoconstrictive and natriuretic with overall effect on arterial blood pressure. May play a role in the oxidative inactivation of eicosanoids, including both pro-inflammatory and anti-inflammatory mediators such as leukotriene B4 (LTB4), lipoxin A4 (LXA4), and several HETEs. The protein is Cytochrome P450 4F1 of Rattus norvegicus (Rat).